An 87-amino-acid polypeptide reads, in one-letter code: Signal recognition particle 19 kDa protein (87 aa).

Belongs to the SRP19 family. In terms of assembly, part of the signal recognition particle protein translocation system, which is composed of SRP and FtsY. Archaeal SRP consists of a 7S RNA molecule of 300 nucleotides and two protein subunits: SRP54 and SRP19.

The protein resides in the cytoplasm. Involved in targeting and insertion of nascent membrane proteins into the cytoplasmic membrane. Binds directly to 7S RNA and mediates binding of the 54 kDa subunit of the SRP. The chain is Signal recognition particle 19 kDa protein from Methanocaldococcus jannaschii (strain ATCC 43067 / DSM 2661 / JAL-1 / JCM 10045 / NBRC 100440) (Methanococcus jannaschii).